The sequence spans 930 residues: Pyruvate dehydrogenase E1 component (930 aa).

Residues 1–10 are compositionally biased toward basic and acidic residues; the sequence is MTTDFARHDL. Positions 1–21 are disordered; that stretch reads MTTDFARHDLAQNSNSASEPD. Lys375 is covalently cross-linked (Isoglutamyl lysine isopeptide (Lys-Gln) (interchain with Q-Cter in protein Pup)).

In terms of assembly, homodimer. Part of the PDH complex, consisting of multiple copies of AceE (E1), DlaT (E2) and Lpd (E3). Requires Mg(2+) as cofactor. Thiamine diphosphate is required as a cofactor.

It catalyses the reaction N(6)-[(R)-lipoyl]-L-lysyl-[protein] + pyruvate + H(+) = N(6)-[(R)-S(8)-acetyldihydrolipoyl]-L-lysyl-[protein] + CO2. Its function is as follows. Component of the pyruvate dehydrogenase (PDH) complex, that catalyzes the overall conversion of pyruvate to acetyl-CoA and CO(2). AceE has reductase activity with pyruvate but does not react with 2-oxoglutarate. The protein is Pyruvate dehydrogenase E1 component (aceE) of Mycobacterium tuberculosis (strain ATCC 25618 / H37Rv).